Here is a 188-residue protein sequence, read N- to C-terminus: Elongation factor P (188 aa).

Lysine 34 carries the N6-(3,6-diaminohexanoyl)-5-hydroxylysine modification.

The protein belongs to the elongation factor P family. May be beta-lysylated on the epsilon-amino group of Lys-34 by the combined action of EpmA and EpmB, and then hydroxylated on the C5 position of the same residue by EpmC (if this protein is present). Lysylation is critical for the stimulatory effect of EF-P on peptide-bond formation. The lysylation moiety may extend toward the peptidyltransferase center and stabilize the terminal 3-CCA end of the tRNA. Hydroxylation of the C5 position on Lys-34 may allow additional potential stabilizing hydrogen-bond interactions with the P-tRNA.

It localises to the cytoplasm. The protein operates within protein biosynthesis; polypeptide chain elongation. Functionally, involved in peptide bond synthesis. Alleviates ribosome stalling that occurs when 3 or more consecutive Pro residues or the sequence PPG is present in a protein, possibly by augmenting the peptidyl transferase activity of the ribosome. Modification of Lys-34 is required for alleviation. This is Elongation factor P from Erwinia tasmaniensis (strain DSM 17950 / CFBP 7177 / CIP 109463 / NCPPB 4357 / Et1/99).